A 221-amino-acid polypeptide reads, in one-letter code: Late protein I196L (221 aa).

3 tandem repeats follow at residues 28–48, 49–69, and 70–90. Residues 91–112 form a 4; approximate repeat; that stretch reads SNYSMTAIPNNISDKEDYTYFS.

This sequence belongs to the asfivirus I196L family.

This African swine fever virus (isolate Tick/Malawi/Lil 20-1/1983) (ASFV) protein is Late protein I196L.